The sequence spans 569 residues: 2-succinyl-5-enolpyruvyl-6-hydroxy-3-cyclohexene-1-carboxylate synthase (569 aa).

The protein belongs to the TPP enzyme family. MenD subfamily. Homodimer. Mg(2+) is required as a cofactor. The cofactor is Mn(2+). It depends on thiamine diphosphate as a cofactor.

It carries out the reaction isochorismate + 2-oxoglutarate + H(+) = 5-enolpyruvoyl-6-hydroxy-2-succinyl-cyclohex-3-ene-1-carboxylate + CO2. It functions in the pathway quinol/quinone metabolism; 1,4-dihydroxy-2-naphthoate biosynthesis; 1,4-dihydroxy-2-naphthoate from chorismate: step 2/7. It participates in cofactor biosynthesis; phylloquinone biosynthesis. Catalyzes the thiamine diphosphate-dependent decarboxylation of 2-oxoglutarate and the subsequent addition of the resulting succinic semialdehyde-thiamine pyrophosphate anion to isochorismate to yield 2-succinyl-5-enolpyruvyl-6-hydroxy-3-cyclohexene-1-carboxylate (SEPHCHC). This is 2-succinyl-5-enolpyruvyl-6-hydroxy-3-cyclohexene-1-carboxylate synthase from Microcystis aeruginosa (strain NIES-843 / IAM M-2473).